The chain runs to 277 residues: Antigen 1 (277 aa).

The signal sequence occupies residues 1–16 (MQLLALTLALCASIAA). N-linked (GlcNAc...) asparagine glycans are attached at residues Asn-41, Asn-71, Asn-127, and Asn-200. The disordered stretch occupies residues 230 to 277 (CVGGEEENDGQGEEQTEEPAQDDQQDEAAEEEIPENCHTHEGGELHCT). A compositionally biased stretch (acidic residues) spans 233–263 (GEEENDGQGEEQTEEPAQDDQQDEAAEEEIP). Residues 264–277 (ENCHTHEGGELHCT) show a composition bias toward basic and acidic residues.

It belongs to the ZPS1 family.

This Emericella nidulans (strain FGSC A4 / ATCC 38163 / CBS 112.46 / NRRL 194 / M139) (Aspergillus nidulans) protein is Antigen 1 (aspnd1).